The following is a 272-amino-acid chain: Imidazole glycerol phosphate synthase subunit HisF (272 aa).

Catalysis depends on residues Asp11 and Asp130.

Belongs to the HisA/HisF family. As to quaternary structure, heterodimer of HisH and HisF.

Its subcellular location is the cytoplasm. It carries out the reaction 5-[(5-phospho-1-deoxy-D-ribulos-1-ylimino)methylamino]-1-(5-phospho-beta-D-ribosyl)imidazole-4-carboxamide + L-glutamine = D-erythro-1-(imidazol-4-yl)glycerol 3-phosphate + 5-amino-1-(5-phospho-beta-D-ribosyl)imidazole-4-carboxamide + L-glutamate + H(+). The protein operates within amino-acid biosynthesis; L-histidine biosynthesis; L-histidine from 5-phospho-alpha-D-ribose 1-diphosphate: step 5/9. Its function is as follows. IGPS catalyzes the conversion of PRFAR and glutamine to IGP, AICAR and glutamate. The HisF subunit catalyzes the cyclization activity that produces IGP and AICAR from PRFAR using the ammonia provided by the HisH subunit. In Methanococcus maripaludis (strain C7 / ATCC BAA-1331), this protein is Imidazole glycerol phosphate synthase subunit HisF.